We begin with the raw amino-acid sequence, 298 residues long: Lipoyl synthase (298 aa).

The [4Fe-4S] cluster site is built by Cys40, Cys45, Cys51, Cys67, Cys71, Cys74, and Ser280. The 217-residue stretch at 53 to 269 folds into the Radical SAM core domain; that stretch reads AVRRTATFMI…KEIAMAKGFS (217 aa).

It belongs to the radical SAM superfamily. Lipoyl synthase family. [4Fe-4S] cluster is required as a cofactor.

It localises to the cytoplasm. It catalyses the reaction [[Fe-S] cluster scaffold protein carrying a second [4Fe-4S](2+) cluster] + N(6)-octanoyl-L-lysyl-[protein] + 2 oxidized [2Fe-2S]-[ferredoxin] + 2 S-adenosyl-L-methionine + 4 H(+) = [[Fe-S] cluster scaffold protein] + N(6)-[(R)-dihydrolipoyl]-L-lysyl-[protein] + 4 Fe(3+) + 2 hydrogen sulfide + 2 5'-deoxyadenosine + 2 L-methionine + 2 reduced [2Fe-2S]-[ferredoxin]. The protein operates within protein modification; protein lipoylation via endogenous pathway; protein N(6)-(lipoyl)lysine from octanoyl-[acyl-carrier-protein]. Its function is as follows. Catalyzes the radical-mediated insertion of two sulfur atoms into the C-6 and C-8 positions of the octanoyl moiety bound to the lipoyl domains of lipoate-dependent enzymes, thereby converting the octanoylated domains into lipoylated derivatives. The sequence is that of Lipoyl synthase from Bacillus pumilus (strain SAFR-032).